The primary structure comprises 178 residues: Large ribosomal subunit protein uL6 (178 aa).

The protein belongs to the universal ribosomal protein uL6 family. As to quaternary structure, part of the 50S ribosomal subunit.

This protein binds to the 23S rRNA, and is important in its secondary structure. It is located near the subunit interface in the base of the L7/L12 stalk, and near the tRNA binding site of the peptidyltransferase center. This chain is Large ribosomal subunit protein uL6, found in Buchnera aphidicola subsp. Schizaphis graminum (strain Sg).